The primary structure comprises 3241 residues: PHD finger protein rhinoceros (3241 aa).

The segment covering 1–16 (MSQRGKRGNQQHHQSH) has biased composition (basic residues). Residues 1–126 (MSQRGKRGNQ…GASSSSSWQA (126 aa)) are disordered. 2 stretches are compositionally biased toward low complexity: residues 42–55 (PPNGATTAAVAEVT) and 90–126 (RAAAGATSTSKSKSTKLAKSASKCKSQGASSSSSWQA). Residues 312–362 (NVICDVCRSPDSEEANEMVFCDNCNICVHQACYGITAIPSGQWLCRTCSMG) form a PHD-type 1 zinc finger. A C2HC pre-PHD-type zinc finger spans residues 364 to 398 (KPDCVLCPNKGGAMKSNKSGKHWAHVSCALWIPEV). The segment at 422–481 (LICVLCRKRVGSCIQCSVKPCKTAYHVTCAFQHGLEMRAIIEEGNAEDGVKLRSYCQKHS) adopts a PHD-type 2 zinc-finger fold. 6 disordered regions span residues 482 to 501 (MSKGKKENAGSHGGGSASVA), 508 to 554 (NRYG…ARAQ), 737 to 1266 (SGKQ…VATP), 1279 to 1483 (PQRQ…STKV), 1500 to 1613 (PKTN…SETR), and 1632 to 1746 (NLGA…QHLL). Residues 540 to 554 (KTELTSEERNQARAQ) show a composition bias toward basic and acidic residues. Residues 762–777 (KKLNNGILSSRTSSPE) show a composition bias toward polar residues. Residues 807 to 874 (KSSAAAATST…SGSSSAGSGV (68 aa)) show a composition bias toward low complexity. Residues 931 to 943 (ERCRNRQEPERGA) are compositionally biased toward basic and acidic residues. Residues 949 to 965 (QSKSVPNRSQASRSKPT) show a composition bias toward polar residues. Residues 995 to 1007 (DADESVSSDESEE) are compositionally biased toward acidic residues. Positions 1019–1031 (STTTSGLATTGSA) are enriched in low complexity. A compositionally biased stretch (polar residues) spans 1060–1075 (TVESNVSDSQNQQTIR). Low complexity predominate over residues 1087 to 1104 (TAATTSSTSQAASSTSKA). Polar residues-rich tracts occupy residues 1117-1126 (IGNSTKTKPN) and 1151-1163 (NMRSTNLATTLQP). Positions 1184 to 1211 (KVKDSSSRVSNEADKSSLEKVRPKEHLQ) are enriched in basic and acidic residues. Residues 1313-1327 (VTSATISGSGSSVPA) are compositionally biased toward polar residues. T1346 bears the Phosphothreonine mark. Phosphoserine is present on S1352. T1364 is modified (phosphothreonine). The segment covering 1382–1426 (SSSSSGDSESSSSSSSSGSSSSSGGSDSDSESQASNSENPSSREP) has biased composition (low complexity). Phosphothreonine is present on T1456. The segment covering 1463–1483 (NVLNIPSTRSRQNSTTKSTKV) has biased composition (polar residues). Residues 1541–1558 (SPEKTVSRCKSRAEESPK) are compositionally biased toward basic and acidic residues. A compositionally biased stretch (polar residues) spans 1576–1594 (KGTSSLDKLLNKKQQQMNH). Residues 1599 to 1608 (TPPPISPTPP) show a composition bias toward pro residues. The span at 1664 to 1675 (TAPTRTQLSASA) shows a compositional bias: polar residues. A compositionally biased stretch (pro residues) spans 1688 to 1699 (PAAPLPASPTPT). Residues 1717 to 1731 (RRMRWRSRRRRRRRS) are compositionally biased toward basic residues. Coiled coils occupy residues 1741–1770 (HTQHLLNEMEMARELEEERKNELLANASKY) and 1893–1925 (SEEDSIQATRNLLEKLRKTKRKAQDDCSSKEAV). Disordered regions lie at residues 2037 to 2061 (LEKSPHQKGACPLSSNGGANVGQPA), 2124 to 2148 (AERRSSSPSSVSESNDPPQPPPVVT), 2203 to 2227 (NNTNTTQHQPTTPAHQQQQQRTPNN), 2346 to 2454 (TPPV…GGVT), 2598 to 2629 (ATGTGTSPSKQHSGPTALVAPPTGPNPTPAPN), 2667 to 2691 (SEEVSIDSDSTIPHSKTSTSDARSQ), 2768 to 2811 (NDDS…NSSS), 2832 to 2911 (GAGA…SVDE), 2964 to 3015 (NKRG…TTTM), 3042 to 3169 (KAET…EAAM), and 3184 to 3241 (VNVG…CEVR). A compositionally biased stretch (polar residues) spans 2359–2381 (KRTSVSGSNLSKKQTHKSPQLPQ). The span at 2392–2402 (PLQPPTPPAPV) shows a compositional bias: pro residues. Residues 2430 to 2439 (GSGGSGAPGR) are compositionally biased toward gly residues. Composition is skewed to polar residues over residues 2598–2611 (ATGTGTSPSKQHSG) and 2673–2689 (DSDSTIPHSKTSTSDAR). The segment covering 2855 to 2865 (NNDNNGKTGAA) has biased composition (polar residues). Positions 2876–2887 (KTLESSEDDHQA) are enriched in basic and acidic residues. Phosphoserine is present on residues S2880 and S2881. Polar residues predominate over residues 2899-2911 (ANETPSGVSSVDE). The segment covering 2964 to 2974 (NKRGVVVKDGE) has biased composition (basic and acidic residues). Basic residues predominate over residues 2984 to 3002 (KRPKSSKPKKEKKEKKRQK). Residues 3003–3015 (QQQLILSSSTTTM) show a composition bias toward low complexity. Residues S3104 and S3110 each carry the phosphoserine modification. 2 stretches are compositionally biased toward polar residues: residues 3115–3130 (LLNSFTPHSQNANTSP) and 3184–3197 (VNVGNYENSNNSLP). The span at 3198-3218 (SASGTGSASSNSCNSNSINNN) shows a compositional bias: low complexity. A compositionally biased stretch (gly residues) spans 3219-3230 (GSGGGRASGEGG).

Belongs to the JADE family.

It localises to the nucleus. May function as a negative regulator of the EGFR/Ras/MAPK signaling pathway during eye development. This chain is PHD finger protein rhinoceros (rno), found in Drosophila melanogaster (Fruit fly).